Consider the following 380-residue polypeptide: Kappa-type opioid receptor (380 aa).

Topologically, residues 1-57 (MESPIQIFRGDPGPTCSPSACLLPNSSSWFPNWAESDSNGSVGSEDQQLESAHISPA) are extracellular. N-linked (GlcNAc...) asparagine glycosylation is found at asparagine 25 and asparagine 39. The helical transmembrane segment at 58 to 85 (IPVIITAVYSVVFVVGLVGNSLVMFVII) threads the bilayer. Over 86–95 (RYTKMKTATN) the chain is Cytoplasmic. Residues 96–119 (IYIFNLALADALVTTTMPFQSAVY) traverse the membrane as a helical segment. The Extracellular portion of the chain corresponds to 120 to 132 (LMNSWPFGDVLCK). A disulfide bond links cysteine 131 and cysteine 210. Residues 133 to 154 (IVISIDYYNMFTSIFTLTMMSV) traverse the membrane as a helical segment. Residues 155 to 173 (DRYIAVCHPVKALDFRTPL) are Cytoplasmic-facing. A helical transmembrane segment spans residues 174–196 (KAKIINICIWLLASSVGISAIVL). Topologically, residues 197-222 (GGTKVREDVDVIECSLQFPDDEYSWW) are extracellular. The chain crosses the membrane as a helical span at residues 223-247 (DLFMKICVFVFAFVIPVLIIIVCYT). Residues 248–274 (LMILRLKSVRLLSGSREKDRNLRRITK) are Cytoplasmic-facing. The helical transmembrane segment at 275–296 (LVLVVVAVFIICWTPIHIFILV) threads the bilayer. Topologically, residues 297-311 (EALGSTSHSTAALSS) are extracellular. Residues 312–333 (YYFCIALGYTNSSLNPVLYAFL) traverse the membrane as a helical segment. At 334–380 (DENFKRCFRDFCFPIKMRMERQSTNRVRNTVQDPASMRDVGGMNKPV) the chain is on the cytoplasmic side. The S-palmitoyl cysteine moiety is linked to residue cysteine 345.

This sequence belongs to the G-protein coupled receptor 1 family. In terms of assembly, interacts with NHERF1. Interacts with GABARAPL1. Detected in brain (at protein level). Brain (neocortex, hippocampus, amygdala, medial habenula, hypothalamus, locus ceruleus, and parabrachial nucleus).

It is found in the cell membrane. In terms of biological role, G-protein coupled opioid receptor that functions as a receptor for endogenous alpha-neoendorphins and dynorphins, but has low affinity for beta-endorphins. Also functions as a receptor for various synthetic opioids and for the psychoactive diterpene salvinorin A. Ligand binding causes a conformation change that triggers signaling via guanine nucleotide-binding proteins (G proteins) and modulates the activity of down-stream effectors, such as adenylate cyclase. Signaling leads to the inhibition of adenylate cyclase activity. Inhibits neurotransmitter release by reducing calcium ion currents and increasing potassium ion conductance. Plays a role in the perception of pain. Plays a role in mediating reduced physical activity upon treatment with synthetic opioids. Plays a role in the regulation of salivation in response to synthetic opioids. May play a role in arousal and regulation of autonomic and neuroendocrine functions. This chain is Kappa-type opioid receptor (Oprk1), found in Mus musculus (Mouse).